Reading from the N-terminus, the 115-residue chain is Small ribosomal subunit protein uS13 (115 aa).

The interval 92-115 (RRGLPVRGQNTKNNARTRKGSKRK) is disordered. Over residues 106–115 (ARTRKGSKRK) the composition is skewed to basic residues.

Belongs to the universal ribosomal protein uS13 family. In terms of assembly, part of the 30S ribosomal subunit. Forms a loose heterodimer with protein S19. Forms two bridges to the 50S subunit in the 70S ribosome.

Its function is as follows. Located at the top of the head of the 30S subunit, it contacts several helices of the 16S rRNA. In the 70S ribosome it contacts the 23S rRNA (bridge B1a) and protein L5 of the 50S subunit (bridge B1b), connecting the 2 subunits; these bridges are implicated in subunit movement. Contacts the tRNAs in the A and P-sites. The polypeptide is Small ribosomal subunit protein uS13 (Lactobacillus gasseri (strain ATCC 33323 / DSM 20243 / BCRC 14619 / CIP 102991 / JCM 1131 / KCTC 3163 / NCIMB 11718 / NCTC 13722 / AM63)).